We begin with the raw amino-acid sequence, 107 residues long: Large ribosomal subunit protein eL33B (107 aa).

Position 2 is an N-acetylalanine; partial (A2). K47 is covalently cross-linked (Glycyl lysine isopeptide (Lys-Gly) (interchain with G-Cter in ubiquitin)).

The protein belongs to the eukaryotic ribosomal protein eL33 family. As to quaternary structure, component of the large ribosomal subunit (LSU). Mature yeast ribosomes consist of a small (40S) and a large (60S) subunit. The 40S small subunit contains 1 molecule of ribosomal RNA (18S rRNA) and 33 different proteins (encoded by 57 genes). The large 60S subunit contains 3 rRNA molecules (25S, 5.8S and 5S rRNA) and 46 different proteins (encoded by 81 genes). Post-translationally, N-terminally acetylated by acetyltransferase NatA.

It is found in the cytoplasm. In terms of biological role, component of the ribosome, a large ribonucleoprotein complex responsible for the synthesis of proteins in the cell. The small ribosomal subunit (SSU) binds messenger RNAs (mRNAs) and translates the encoded message by selecting cognate aminoacyl-transfer RNA (tRNA) molecules. The large subunit (LSU) contains the ribosomal catalytic site termed the peptidyl transferase center (PTC), which catalyzes the formation of peptide bonds, thereby polymerizing the amino acids delivered by tRNAs into a polypeptide chain. The nascent polypeptides leave the ribosome through a tunnel in the LSU and interact with protein factors that function in enzymatic processing, targeting, and the membrane insertion of nascent chains at the exit of the ribosomal tunnel. The protein is Large ribosomal subunit protein eL33B of Saccharomyces cerevisiae (strain ATCC 204508 / S288c) (Baker's yeast).